The sequence spans 205 residues: Ribosomal RNA large subunit methyltransferase E (205 aa).

Residues G50, W52, D67, N83, and D111 each contribute to the S-adenosyl-L-methionine site. The active-site Proton acceptor is the K151.

It belongs to the class I-like SAM-binding methyltransferase superfamily. RNA methyltransferase RlmE family.

The protein localises to the cytoplasm. The enzyme catalyses uridine(2552) in 23S rRNA + S-adenosyl-L-methionine = 2'-O-methyluridine(2552) in 23S rRNA + S-adenosyl-L-homocysteine + H(+). In terms of biological role, specifically methylates the uridine in position 2552 of 23S rRNA at the 2'-O position of the ribose in the fully assembled 50S ribosomal subunit. The protein is Ribosomal RNA large subunit methyltransferase E of Thermoplasma acidophilum (strain ATCC 25905 / DSM 1728 / JCM 9062 / NBRC 15155 / AMRC-C165).